The primary structure comprises 346 residues: Olfactory receptor 13D1 (346 aa).

At 1-57 (MYRFTDFDVSNISIYLNHVLFYTTQQAGDLEHMETRNYSAMTEFFLVGLSQYPELQL) the chain is on the extracellular side. Asparagine 37 carries an N-linked (GlcNAc...) asparagine glycan. Residues 58–78 (FLFLLCLIMYMIILLGNSLLI) traverse the membrane as a helical segment. Residues 79–86 (IITILDSR) lie on the Cytoplasmic side of the membrane. A helical transmembrane segment spans residues 87–107 (LHTPMYFFLGNLSFLDICYTS). The Extracellular segment spans residues 108–131 (SSIPPMLIIFMSERKSISFIGCAL). Cysteines 129 and 221 form a disulfide. The chain crosses the membrane as a helical span at residues 132–152 (QMVVSLGLGSTECVLLAVMAY). The Cytoplasmic portion of the chain corresponds to 153–171 (DHYVAICNPLRYSIIMNGV). Residues 172–192 (LYVQMAAWSWIIGCLTSLLQT) form a helical membrane-spanning segment. The Extracellular portion of the chain corresponds to 193 to 229 (VLTMMLPFCGNNVIDHITCEILALLKLVCSDITINVL). Residues 230-249 (IMTVTNIVSLVILLLLIFIS) traverse the membrane as a helical segment. The Cytoplasmic portion of the chain corresponds to 250-269 (YVFILSSILRINCAEGRKKA). Residues 270-290 (FSTCSAHSIVVILFYGSALFM) traverse the membrane as a helical segment. Residues 291 to 303 (YMKPKSKNTNTSD) are Extracellular-facing. Residue asparagine 300 is glycosylated (N-linked (GlcNAc...) asparagine). A helical transmembrane segment spans residues 304–324 (EIIGLSYGVVSPMLNPIIYSL). Residues 325 to 346 (RNKEVKEAVKKVLSRHLHLLKM) lie on the Cytoplasmic side of the membrane.

This sequence belongs to the G-protein coupled receptor 1 family.

It is found in the cell membrane. In terms of biological role, odorant receptor. This Homo sapiens (Human) protein is Olfactory receptor 13D1 (OR13D1).